A 152-amino-acid chain; its full sequence is Large ribosomal subunit protein uL13 (152 aa).

Residues 130-152 (HPHEAQSPEVLDLASKNPKNTRS) form a disordered region.

It belongs to the universal ribosomal protein uL13 family. Part of the 50S ribosomal subunit.

In terms of biological role, this protein is one of the early assembly proteins of the 50S ribosomal subunit, although it is not seen to bind rRNA by itself. It is important during the early stages of 50S assembly. In Dinoroseobacter shibae (strain DSM 16493 / NCIMB 14021 / DFL 12), this protein is Large ribosomal subunit protein uL13.